The following is a 441-amino-acid chain: Insulinoma-associated protein 1 (441 aa).

The segment covering 1–12 (MPKGFLVKRSRK) has biased composition (basic residues). The tract at residues 1–20 (MPKGFLVKRSRKSPPVSYRV) is SNAG domain. Disordered regions lie at residues 1-31 (MPKG…GESL), 43-189 (TGGA…KAIR), 205-224 (LKIK…SSGP), and 278-316 (RWHK…EDGL). The segment covering 19–28 (RVREEEEPRG) has biased composition (basic and acidic residues). Positions 74–83 (NPDTVQQALY) are enriched in polar residues. Residues 89-98 (VSREQRERKY) are compositionally biased toward basic and acidic residues. 2 stretches are compositionally biased toward low complexity: residues 138–147 (VSSSSSVSRS) and 169–180 (GATSSSAPSKPP). The segment at 258-280 (YRCPECHKVFSCPANLASHRRWH) adopts a C2H2-type 1 zinc-finger fold. A compositionally biased stretch (basic and acidic residues) spans 292-302 (AKEEPLSDRDT). C2H2-type zinc fingers lie at residues 317-339 (YECP…LLSH), 372-395 (HPCP…RLLH), and 400-423 (YPCK…NKCH).

Belongs to the INSM1 family.

Its subcellular location is the nucleus. May act as a transcriptional regulator. Plays a role in noradrenergic neuron, pancreatic and gastrointestinal endocrine cells differentiation during embryonic development. This chain is Insulinoma-associated protein 1 (insm1), found in Xenopus tropicalis (Western clawed frog).